Here is a 308-residue protein sequence, read N- to C-terminus: Homeobox-leucine zipper protein HOX2 (308 aa).

Disordered stretches follow at residues 15 to 36 (QGSLTSSTTTTSSPGAGSSSPW) and 71 to 117 (QGRA…RKKL). Residues 74 to 88 (ASTSPDSAAALSSAS) show a composition bias toward low complexity. Residues 112 to 171 (GGRKKLRLSKDQAAVLEECFKTHSTLNPKQKVALANRLGLRPRQVEVWFQNRRARTKLKQ) constitute a DNA-binding region (homeobox). A leucine-zipper region spans residues 170-214 (KQTEVDCEYLKRWCERLADENKRLEKELADLRALKAAPSPASASA).

It belongs to the HD-ZIP homeobox family. Class II subfamily. In terms of assembly, homodimer. May form a heterodimer with HOX1, HOX3 or HOX7. In terms of tissue distribution, expressed in seedlings, roots, leaves, nodes, internodes, flowers and embryo.

It is found in the nucleus. Functionally, probable transcription factor that binds to the DNA sequence 5'-CAAT[GC]ATTG-3'. The polypeptide is Homeobox-leucine zipper protein HOX2 (HOX2) (Oryza sativa subsp. indica (Rice)).